Consider the following 376-residue polypeptide: Protein RecA (376 aa).

An ATP-binding site is contributed by 78–85 (GPESSGKT). Residues 355 to 376 (PVELVPNVDFDDEADTEADAED) are disordered. Residues 363-376 (DFDDEADTEADAED) are compositionally biased toward acidic residues.

This sequence belongs to the RecA family.

The protein localises to the cytoplasm. Its function is as follows. Can catalyze the hydrolysis of ATP in the presence of single-stranded DNA, the ATP-dependent uptake of single-stranded DNA by duplex DNA, and the ATP-dependent hybridization of homologous single-stranded DNAs. It interacts with LexA causing its activation and leading to its autocatalytic cleavage. The sequence is that of Protein RecA from Corynebacterium glutamicum (strain R).